Reading from the N-terminus, the 185-residue chain is Ribosome-recycling factor (185 aa).

The protein belongs to the RRF family.

It is found in the cytoplasm. Functionally, responsible for the release of ribosomes from messenger RNA at the termination of protein biosynthesis. May increase the efficiency of translation by recycling ribosomes from one round of translation to another. The protein is Ribosome-recycling factor of Corynebacterium kroppenstedtii (strain DSM 44385 / JCM 11950 / CIP 105744 / CCUG 35717).